The primary structure comprises 355 residues: Uroporphyrinogen decarboxylase (355 aa).

Residues 27–31 (RQAGR), Asp-78, Tyr-155, Ser-210, and His-328 contribute to the substrate site.

The protein belongs to the uroporphyrinogen decarboxylase family. Homodimer.

It is found in the cytoplasm. It catalyses the reaction uroporphyrinogen III + 4 H(+) = coproporphyrinogen III + 4 CO2. Its pathway is porphyrin-containing compound metabolism; protoporphyrin-IX biosynthesis; coproporphyrinogen-III from 5-aminolevulinate: step 4/4. Its function is as follows. Catalyzes the decarboxylation of four acetate groups of uroporphyrinogen-III to yield coproporphyrinogen-III. The protein is Uroporphyrinogen decarboxylase of Ectopseudomonas mendocina (strain ymp) (Pseudomonas mendocina).